The chain runs to 338 residues: Putative ankyrin repeat protein CBU_0781 (338 aa).

Residues 1–31 (MSRRETPTSTISSTPTGTRTPRRRLSRKGHP) are disordered. Residues 7-19 (PTSTISSTPTGTR) are compositionally biased toward low complexity. A compositionally biased stretch (basic residues) spans 20–31 (TPRRRLSRKGHP). ANK repeat units lie at residues 92–124 (QGDT…IVNK) and 125–157 (LGET…IKYK). Residues 197–242 (SQIMASDKEIDEIIRNARNLQIIKKEKREAEERARTKKSKQITLQR) adopt a coiled-coil conformation. The segment at 319–338 (KKEDTTLSRNNSLSCLSSPR) is disordered. The span at 325–338 (LSRNNSLSCLSSPR) shows a compositional bias: low complexity.

This Coxiella burnetii (strain RSA 493 / Nine Mile phase I) protein is Putative ankyrin repeat protein CBU_0781.